The chain runs to 240 residues: Ubiquinone biosynthesis O-methyltransferase (240 aa).

Positions 44, 64, 85, and 129 each coordinate S-adenosyl-L-methionine.

It belongs to the methyltransferase superfamily. UbiG/COQ3 family.

The catalysed reaction is a 3-demethylubiquinol + S-adenosyl-L-methionine = a ubiquinol + S-adenosyl-L-homocysteine + H(+). It carries out the reaction a 3-(all-trans-polyprenyl)benzene-1,2-diol + S-adenosyl-L-methionine = a 2-methoxy-6-(all-trans-polyprenyl)phenol + S-adenosyl-L-homocysteine + H(+). Its pathway is cofactor biosynthesis; ubiquinone biosynthesis. O-methyltransferase that catalyzes the 2 O-methylation steps in the ubiquinone biosynthetic pathway. This Escherichia coli O8 (strain IAI1) protein is Ubiquinone biosynthesis O-methyltransferase.